The sequence spans 199 residues: Ribonuclease HII (199 aa).

The RNase H type-2 domain maps to 10–199 (HLVAGVDEVG…VKRALGLASN (190 aa)). A divalent metal cation contacts are provided by Asp-16, Glu-17, and Asp-108.

Belongs to the RNase HII family. Mn(2+) is required as a cofactor. Requires Mg(2+) as cofactor.

It is found in the cytoplasm. It catalyses the reaction Endonucleolytic cleavage to 5'-phosphomonoester.. Functionally, endonuclease that specifically degrades the RNA of RNA-DNA hybrids. The sequence is that of Ribonuclease HII from Klebsiella pneumoniae subsp. pneumoniae (strain ATCC 700721 / MGH 78578).